A 413-amino-acid chain; its full sequence is Intracellular hyaluronan-binding protein 4 (413 aa).

Phosphoserine is present on residues S7 and S36. The stretch at 40 to 64 forms a coiled coil; sequence DILREAERRRQQQLQRKRRDEAAAA. Positions 42–206 are disordered; the sequence is LREAERRRQQ…RGGPGNRVFD (165 aa). Residues 62 to 82 show a composition bias toward low complexity; that stretch reads AAAAGAGPRGGRSPAGASGHR. R70 bears the Omega-N-methylarginine mark. S74 carries the phosphoserine modification. Basic and acidic residues predominate over residues 87 to 97; the sequence is GRRESQKERKS. S108 is modified (phosphoserine). Residues 139–182 are compositionally biased toward basic and acidic residues; the sequence is MLERAERRSYREYRPYETERQADFTAEKFPDEKPGDRFDRDRPL. A compositionally biased stretch (gly residues) spans 184–201; sequence GRGGPRGGMRGRGRGGPG. Glycyl lysine isopeptide (Lys-Gly) (interchain with G-Cter in SUMO1); alternate cross-links involve residues K213 and K276. Glycyl lysine isopeptide (Lys-Gly) (interchain with G-Cter in SUMO2); alternate cross-links involve residues K213 and K276. Positions 227-320 are disordered; the sequence is VRTEDNMGGC…IRKPESTVPS (94 aa). The span at 294-315 shows a compositional bias: basic and acidic residues; sequence DEWKNLQEQTRPKPEFNIRKPE. K336 is covalently cross-linked (Glycyl lysine isopeptide (Lys-Gly) (interchain with G-Cter in SUMO1); alternate). K336 is covalently cross-linked (Glycyl lysine isopeptide (Lys-Gly) (interchain with G-Cter in SUMO2); alternate). Phosphothreonine; by PKC occurs at positions 354 and 375. The tract at residues 360-413 is disordered; it reads NFGNLPRPGRGARGGTRGGRGRIRRAENYGPRAEVVMQDVAPNPDDPEDFPALS. Positions 404–413 are enriched in acidic residues; it reads DDPEDFPALS.

It belongs to the SERBP1-HABP4 family. In terms of assembly, associates with ribosomes; promoting ribosome stabilization. Interacts with EEF2/eEF2; promoting ribosome stabilization. Interacts with FMR1. Interacts with FXR1 and FXR2. Interacts with CHD3 (via C-terminus). Interacts (via C-terminus) with RACK1. Interacts with p53/TP53. Interacts (via N-terminus) with SRSF9; this interaction is direct. Interacts with SYNCRIP; this interaction is direct. Interacts with MEF2C (via N-terminus); this interaction decreases DNA-binding activity of MEF2C in myocardial cells in response to mechanical stress. Interacts with PRMT1 (via N-terminus). Interacts with SPIN1. Post-translationally, methylated. Methylation is decreased by phorbol 12-myristate 13-acetate (PMA)-activated PKC, in vitro. Phosphorylated by phorbol 12-myristate 13-acetate (PMA)-activated PKC isoforms at Thr-354 and Thr-375. Highly expressed in brain, heart, and kidney, and moderately expressed in skeletal muscle. Also expressed in a variety of tumor cell lines and in activated but not resting leukocytes.

The protein resides in the nucleus. Its subcellular location is the cytoplasm. The protein localises to the stress granule. It localises to the sarcoplasm. It is found in the nuclear body. The protein resides in the nucleolus. Its subcellular location is the nucleus speckle. The protein localises to the cajal body. It localises to the gem. Functionally, ribosome-binding protein that promotes ribosome hibernation, a process during which ribosomes are stabilized in an inactive state and preserved from proteasomal degradation. Acts via its association with EEF2/eEF2 factor at the A-site of the ribosome, promoting ribosome stabilization in an inactive state compatible with storage. Plays a key role in ribosome hibernation in the mature oocyte by promoting ribosome stabilization. Ribosomes, which are produced in large quantities during oogenesis, are stored and translationally repressed in the oocyte and early embryo. Also binds RNA, regulating transcription and pre-mRNA splicing. Binds (via C-terminus) to poly(U) RNA. Seems to play a role in PML-nuclear bodies formation. Negatively regulates DNA-binding activity of the transcription factor MEF2C in myocardial cells in response to mechanical stress. In Homo sapiens (Human), this protein is Intracellular hyaluronan-binding protein 4.